The sequence spans 141 residues: Protein MGF 100-2L (141 aa).

The protein belongs to the asfivirus MGF 100 family.

In terms of biological role, plays a role in virus cell tropism, and may be required for efficient virus replication in macrophages. This is Protein MGF 100-2L from African swine fever virus (isolate Tick/South Africa/Pretoriuskop Pr4/1996) (ASFV).